Reading from the N-terminus, the 32-residue chain is Cytochrome c3, 10 kDa (32 aa).

Heme contacts are provided by His-16, Cys-25, Cys-28, and His-29.

Monomer. Binds 1 heme group per subunit.

The protein resides in the periplasm. In terms of biological role, participates in sulfate respiration coupled with phosphorylation by transferring electrons from the enzyme dehydrogenase to ferredoxin. The protein is Cytochrome c3, 10 kDa of Desulfuromonas acetoxidans (Chloropseudomonas ethylica).